Consider the following 205-residue polypeptide: MSAGKSYRKKMKQRRMNMKISKYALGILMLSLVFVLSACGNNNSTKESTHDNHSDSSTHEEMDHSGSADVPEGLQESKNPKYKVGSQVIINTSHMKGMKGAEATVTGAYDTTAYVVSYTPTNGGQRVDHHKWVIQEEIKDAGDKTLQPGDQVILEASHMKGMKGATAEIDSAEKTTVYMVDYTSTTSGEKVKNHKWVTEDELSAK.

Residues 1 to 40 (MSAGKSYRKKMKQRRMNMKISKYALGILMLSLVFVLSACG) form the signal peptide. The disordered stretch occupies residues 44–82 (STKESTHDNHSDSSTHEEMDHSGSADVPEGLQESKNPKY). Over residues 47–66 (ESTHDNHSDSSTHEEMDHSG) the composition is skewed to basic and acidic residues.

This is an uncharacterized protein from Bacillus subtilis (strain 168).